Consider the following 459-residue polypeptide: Ribulose bisphosphate carboxylase large chain (459 aa).

An N6,N6,N6-trimethyllysine modification is found at K4. Residues N113 and T163 each contribute to the substrate site. The active-site Proton acceptor is the K165. Substrate is bound at residue K167. Mg(2+) contacts are provided by K191, D193, and E194. At K191 the chain carries N6-carboxylysine. H284 acts as the Proton acceptor in catalysis. 3 residues coordinate substrate: R285, H317, and S369.

Belongs to the RuBisCO large chain family. Type I subfamily. As to quaternary structure, heterohexadecamer of 8 large chains and 8 small chains; disulfide-linked. The disulfide link is formed within the large subunit homodimers. Mg(2+) is required as a cofactor. In terms of processing, the disulfide bond which can form in the large chain dimeric partners within the hexadecamer appears to be associated with oxidative stress and protein turnover.

The protein localises to the plastid. Its subcellular location is the chloroplast. It carries out the reaction 2 (2R)-3-phosphoglycerate + 2 H(+) = D-ribulose 1,5-bisphosphate + CO2 + H2O. The enzyme catalyses D-ribulose 1,5-bisphosphate + O2 = 2-phosphoglycolate + (2R)-3-phosphoglycerate + 2 H(+). RuBisCO catalyzes two reactions: the carboxylation of D-ribulose 1,5-bisphosphate, the primary event in carbon dioxide fixation, as well as the oxidative fragmentation of the pentose substrate in the photorespiration process. Both reactions occur simultaneously and in competition at the same active site. In Roridula gorgonias (South African fly bush), this protein is Ribulose bisphosphate carboxylase large chain.